We begin with the raw amino-acid sequence, 366 residues long: N-acetyl-L-citrulline deacetylase (366 aa).

Co(2+) contacts are provided by His-72 and Asp-103. Glu-130 (proton donor/acceptor) is an active-site residue. Residue Glu-155 coordinates Co(2+).

It belongs to the peptidase M20A family. N-acetylcitrulline deacetylase subfamily. Forms homodimers in the crystal, but higher order oligomers may form in solution. It depends on Co(2+) as a cofactor.

The catalysed reaction is N(2)-acetyl-L-citrulline + H2O = L-citrulline + acetate. It catalyses the reaction N(2)-acetyl-L-ornithine + H2O = L-ornithine + acetate. The protein operates within amino-acid biosynthesis; L-arginine biosynthesis. In terms of biological role, catalyzes the deacetylation of N-acetyl-L-citrulline to produce L-citrulline. This is a step in an alternative arginine biosynthesis pathway. Is also able to catalyze the deacetylation of N-acetylornithine in vitro, with almost equal velocity. However, this reaction may be not relevant in vivo since Xanthomonas does not possess the canonical argF gene and cannot convert ornithine to citrulline via ArgF'. The chain is N-acetyl-L-citrulline deacetylase from Xanthomonas campestris pv. campestris (strain ATCC 33913 / DSM 3586 / NCPPB 528 / LMG 568 / P 25).